A 274-amino-acid chain; its full sequence is NADPH-dependent 7-cyano-7-deazaguanine reductase (274 aa).

80–82 is a binding site for substrate; the sequence is VES. 82-83 lines the NADPH pocket; the sequence is SK. Cysteine 181 (thioimide intermediate) is an active-site residue. The active-site Proton donor is the aspartate 188. A substrate-binding site is contributed by 220 to 221; that stretch reads HE. 249–250 is a binding site for NADPH; that stretch reads RG.

The protein belongs to the GTP cyclohydrolase I family. QueF type 2 subfamily. Homodimer.

It localises to the cytoplasm. The catalysed reaction is 7-aminomethyl-7-carbaguanine + 2 NADP(+) = 7-cyano-7-deazaguanine + 2 NADPH + 3 H(+). Its pathway is tRNA modification; tRNA-queuosine biosynthesis. Catalyzes the NADPH-dependent reduction of 7-cyano-7-deazaguanine (preQ0) to 7-aminomethyl-7-deazaguanine (preQ1). The chain is NADPH-dependent 7-cyano-7-deazaguanine reductase from Burkholderia ambifaria (strain MC40-6).